We begin with the raw amino-acid sequence, 394 residues long: Elongation factor Tu (394 aa).

The region spanning 10–205 is the tr-type G domain; that stretch reads KPHVNIGTIG…VDNWIPLPPR (196 aa). Residues 19-26 are G1; that stretch reads GHVDHGKT. Residue 19–26 participates in GTP binding; it reads GHVDHGKT. Thr26 is a Mg(2+) binding site. Positions 60 to 64 are G2; that stretch reads GITIN. Positions 81–84 are G3; the sequence is DCPG. GTP contacts are provided by residues 81-85 and 136-139; these read DCPGH and NKCD. The G4 stretch occupies residues 136–139; it reads NKCD. The segment at 174 to 176 is G5; sequence SAL.

The protein belongs to the TRAFAC class translation factor GTPase superfamily. Classic translation factor GTPase family. EF-Tu/EF-1A subfamily. In terms of assembly, monomer.

It localises to the cytoplasm. The enzyme catalyses GTP + H2O = GDP + phosphate + H(+). Its function is as follows. GTP hydrolase that promotes the GTP-dependent binding of aminoacyl-tRNA to the A-site of ribosomes during protein biosynthesis. The sequence is that of Elongation factor Tu from Bacteroides thetaiotaomicron (strain ATCC 29148 / DSM 2079 / JCM 5827 / CCUG 10774 / NCTC 10582 / VPI-5482 / E50).